Consider the following 274-residue polypeptide: 2,3,4,5-tetrahydropyridine-2,6-dicarboxylate N-succinyltransferase (274 aa).

Belongs to the transferase hexapeptide repeat family.

Its subcellular location is the cytoplasm. The enzyme catalyses (S)-2,3,4,5-tetrahydrodipicolinate + succinyl-CoA + H2O = (S)-2-succinylamino-6-oxoheptanedioate + CoA. It participates in amino-acid biosynthesis; L-lysine biosynthesis via DAP pathway; LL-2,6-diaminopimelate from (S)-tetrahydrodipicolinate (succinylase route): step 1/3. The polypeptide is 2,3,4,5-tetrahydropyridine-2,6-dicarboxylate N-succinyltransferase (Salmonella agona (strain SL483)).